We begin with the raw amino-acid sequence, 156 residues long: MGKQVEIFTDGSCLGNPGPGGYGVLLRYQQHEKTLSEGFYHTTNNRMELMAAIIGLETLTRPCKIVLTTDSQYVRQGITQWIHNWKKRGWRKADKSPVSNVDLWQRLDQAISRHNIDWQWVKGHAGHDENERCDELARAAANSPTETDTGYLENRD.

The RNase H type-1 domain occupies methionine 1–asparagine 142. Mg(2+)-binding residues include aspartate 10, glutamate 48, aspartate 70, and aspartate 134.

It belongs to the RNase H family. Monomer. The cofactor is Mg(2+).

The protein resides in the cytoplasm. It carries out the reaction Endonucleolytic cleavage to 5'-phosphomonoester.. Functionally, endonuclease that specifically degrades the RNA of RNA-DNA hybrids. This chain is Ribonuclease H, found in Photorhabdus laumondii subsp. laumondii (strain DSM 15139 / CIP 105565 / TT01) (Photorhabdus luminescens subsp. laumondii).